The sequence spans 56 residues: Genome polyprotein (56 aa).

The segment at 1–30 is disordered; the sequence is ETMLDRIASGDLESSVDDPRSAEDKRFESH. The span at 17–30 shows a compositional bias: basic and acidic residues; it reads DDPRSAEDKRFESH.

It belongs to the picornaviridae polyprotein family. In terms of assembly, homopentamer. Homooligomer. Interacts with capsid protein VP2. Interacts with capsid protein VP3. In terms of processing, specific enzymatic cleavages by viral protease in vivo yield a variety of precursors and mature proteins. Polyprotein processing intermediates are produced, such as P1-2A which is a functional precursor of the structural proteins, VP0 which is a VP4-VP2 precursor, VP1-2A precursor, 3ABC precursor which is a stable and catalytically active precursor of 3A, 3B and 3C proteins, 3AB and 3CD precursors. The assembly signal 2A is removed from VP1-2A by a host protease, possibly host Cathepsin L. This cleavage occurs over a region of 3 amino-acids probably generating VP1 proteins with heterogeneous C-termini. The assembly signal 2A is removed from VP1-2A by a host protease, possibly host Cathepsin L in naked virions. This cleavage does not occur in enveloped virions. This cleavage occurs over a region of 3 amino-acids probably generating VP1 proteins with heterogeneous C-termini.

It is found in the virion. The protein localises to the host endosome. The protein resides in the host multivesicular body. Functionally, capsid proteins VP1, VP2, and VP3 form a closed capsid enclosing the viral positive strand RNA genome. All these proteins contain a beta-sheet structure called beta-barrel jelly roll. Together they form an icosahedral capsid (T=3) composed of 60 copies of each VP1, VP2, and VP3, with a diameter of approximately 300 Angstroms. VP1 is situated at the 12 fivefold axes, whereas VP2 and VP3 are located at the quasi-sixfold axes. The naked capsid interacts with the host receptor HAVCR1 to provide virion attachment to and probably entry into the target cell. In terms of biological role, precursor component of immature procapsids that corresponds to an extended form of the structural protein VP1. After maturation, possibly by the host Cathepsin L, the assembly signal 2A is cleaved to give rise to the mature VP1 protein. The protein is Genome polyprotein of Callithrix (Owl-faced monkey).